We begin with the raw amino-acid sequence, 1134 residues long: Vinculin (1134 aa).

The interval 1–835 (MPVFHTRTIE…GAVAKVREAF (835 aa)) is N-terminal globular head. The residue at position 97 (Ser97) is a Phosphoserine. Positions 168-208 (MTKMAKMIDERQQELTHQEHRVMLVNSMNTVKELLPVLISA) are talin-interaction. Lys173 bears the N6-acetyllysine mark. 3 consecutive repeat copies span residues 259-369 (ASKD…KVEN), 370-479 (AARK…KTNR), and 480-589 (AVAN…RMQE). Positions 259–589 (ASKDTEAMKR…LKDLKARMQE (331 aa)) are 3 X 112 AA tandem repeats. 7 positions are modified to phosphoserine: Ser260, Ser272, Ser275, Ser288, Ser290, Ser346, and Ser434. The residue at position 496 (Lys496) is an N6-acetyllysine. Tyr537 carries the phosphotyrosine modification. Phosphoserine is present on residues Ser574, Ser579, and Ser600. Phosphothreonine is present on residues Thr604 and Thr672. At Ser721 the chain carries Phosphoserine. Residues 741–764 (MANIQPQMLVAGATSIARRANRIL) form an interaction with ACTN4 region. Ser795 and Ser809 each carry phosphoserine. At Tyr822 the chain carries Phosphotyrosine. Residues 836–878 (QPQEPDFPPPPPDLEQLRLTDELAPPKPPLPEGEVPPPRPPPP) are linker (Pro-rich). The segment at 857–887 (ELAPPKPPLPEGEVPPPRPPPPEEKDEEFPE) is disordered. Residues 860–876 (PPKPPLPEGEVPPPRPP) are compositionally biased toward pro residues. The tract at residues 879–1134 (EEKDEEFPEQ…RWVRKTPWYQ (256 aa)) is C-terminal tail. 2 facilitates phospholipid membrane insertion regions span residues 1003–1046 (RLVR…KRIR) and 1120–1134 (AGFTLRWVRKTPWYQ). Tyr1133 carries the post-translational modification Phosphotyrosine; by SRC-type Tyr-kinases.

This sequence belongs to the vinculin/alpha-catenin family. Exhibits self-association properties. Part of a complex composed of THSD1, PTK2/FAK1, TLN1 and VCL. Interacts with APBB1IP and NRAP. Interacts with TLN1. Interacts with CTNNB1 and this interaction is necessary for its localization to the cell-cell junctions and for its function in regulating cell surface expression of E-cadherin. Interacts with SYNM. Interacts with SORBS1. Interacts with CTNNA1. Binds to ACTN4; this interaction triggers conformational changes. Interacts with FLII. In terms of assembly, (Microbial infection) Interacts via its globular head domain with the central portion of S.flexneri IcsA (also called VirG). In terms of processing, phosphorylated; on serines, threonines and tyrosines. Phosphorylation on Tyr-1133 in activated platelets affects head-tail interactions and cell spreading but has no effect on actin binding nor on localization to focal adhesion plaques. Acetylated; mainly by myristic acid but also by a small amount of palmitic acid. As to expression, metavinculin is muscle-specific.

The protein localises to the cell membrane. It is found in the cell junction. It localises to the adherens junction. Its subcellular location is the focal adhesion. The protein resides in the cytoplasm. The protein localises to the cytoskeleton. It is found in the sarcolemma. It localises to the cell projection. Its subcellular location is the podosome. In terms of biological role, actin filament (F-actin)-binding protein involved in cell-matrix adhesion and cell-cell adhesion. Regulates cell-surface E-cadherin expression and potentiates mechanosensing by the E-cadherin complex. May also play important roles in cell morphology and locomotion. In Homo sapiens (Human), this protein is Vinculin (VCL).